The sequence spans 206 residues: VEL1-related protein SCY_5430 (206 aa).

A signal peptide spans 1-19 (MSFLNIFTFFSVLVSVATA).

It belongs to the VEL1 family.

It is found in the cytoplasm. It localises to the cytosol. In Saccharomyces cerevisiae (strain YJM789) (Baker's yeast), this protein is VEL1-related protein SCY_5430.